A 910-amino-acid polypeptide reads, in one-letter code: Staphylococcal nuclease domain-containing protein 1 (910 aa).

Alanine 2 is modified (N-acetylalanine). 3 consecutive TNase-like domains span residues 18–166, 193–328, and 341–496; these read TVQR…MWSE, KPVN…IWRD, and KQFV…LHSK. Threonine 103 carries the phosphothreonine modification. An N6-acetyllysine modification is found at lysine 193. At threonine 240 the chain carries Phosphothreonine. Short sequence motifs (nuclear localization signal) lie at residues 321–325 and 388–392; these read RRLRI and KKLRP. Position 426 is a phosphoserine (serine 426). Lysine 513 participates in a covalent cross-link: Glycyl lysine isopeptide (Lys-Gly) (interchain with G-Cter in SUMO2). Residues 525 to 660 form the TNase-like 4 domain; sequence GRSEAVVEYV…KQKKEKVWAH (136 aa). Lysine 641 is modified (N6-acetyllysine). The residue at position 645 (serine 645) is a Phosphoserine. One can recognise a Tudor domain in the interval 729 to 787; that stretch reads APRRGEFCIAKFVDGEWYRARVEKVESPAKIHVFYIDYGNREVLPSTRLGTLSPAFSTR. Threonine 779 carries the post-translational modification Phosphothreonine. A phosphoserine mark is found at serine 781, serine 785, and serine 909.

In terms of assembly, forms a ternary complex with STAT6 and POLR2A. Associates with the RNA-induced silencing complex (RISC). Interacts with the RISC components AGO2, FMR1 and TNRC6A. Interacts with GTF2E1 and GTF2E2. Interacts with PIM1. Interacts with STAT5. Interacts with SYT11 (via C2 2 domain); the interaction with SYT11 is direct. As to quaternary structure, (Microbial infection) Interacts with EAV NSP1. Binds to acidic transactivation domain of EBNA2. Interacts with SARS-CoV-2 NSP9. Phosphorylated by PIM1 in vitro. In terms of tissue distribution, ubiquitously expressed.

Its subcellular location is the cytoplasm. The protein localises to the nucleus. It localises to the melanosome. The catalysed reaction is Endonucleolytic cleavage to nucleoside 3'-phosphates and 3'-phosphooligonucleotide end-products.. Its function is as follows. Endonuclease that mediates miRNA decay of both protein-free and AGO2-loaded miRNAs. As part of its function in miRNA decay, regulates mRNAs involved in G1-to-S phase transition. Functions as a bridging factor between STAT6 and the basal transcription factor. Plays a role in PIM1 regulation of MYB activity. Functions as a transcriptional coactivator for STAT5. In terms of biological role, (Microbial infection) Functions as a transcriptional coactivator for the Epstein-Barr virus nuclear antigen 2 (EBNA2). Functionally, (Microbial infection) Promotes SARS-CoV-2 RNA synthesis by binding to negative-sense RNA and the viral protein nsp9. This Homo sapiens (Human) protein is Staphylococcal nuclease domain-containing protein 1 (SND1).